Reading from the N-terminus, the 276-residue chain is Secreted LysM effector LysM10 (276 aa).

A signal peptide spans 1–22 (MLLSLVKFGILSVFLLAQEAVA). Residues Asn27, Asn104, and Asn140 are each glycosylated (N-linked (GlcNAc...) asparagine). Residues 219-264 (KTYIAKEDDTCKSISEAQSISTDRLVEVNHLDYSCSSLTSGTALCI) enclose the LysM domain. Asn267 carries N-linked (GlcNAc...) asparagine glycosylation.

This sequence belongs to the secreted LysM effector family.

It is found in the secreted. Secreted LysM effector that might have a role in sequestration of chitin oligosaccharides (breakdown products of fungal cell walls that are released during invasion and act as triggers of host immunity) to dampen host defense. The protein is Secreted LysM effector LysM10 of Penicillium expansum (Blue mold rot fungus).